Here is a 360-residue protein sequence, read N- to C-terminus: Chorismate synthase (360 aa).

An NADP(+)-binding site is contributed by Arg-46. Residues 123 to 125 (RSS), 235 to 236 (NA), Gly-275, 290 to 294 (KPTPS), and Arg-316 each bind FMN.

The protein belongs to the chorismate synthase family. As to quaternary structure, homotetramer. The cofactor is FMNH2.

The enzyme catalyses 5-O-(1-carboxyvinyl)-3-phosphoshikimate = chorismate + phosphate. It participates in metabolic intermediate biosynthesis; chorismate biosynthesis; chorismate from D-erythrose 4-phosphate and phosphoenolpyruvate: step 7/7. In terms of biological role, catalyzes the anti-1,4-elimination of the C-3 phosphate and the C-6 proR hydrogen from 5-enolpyruvylshikimate-3-phosphate (EPSP) to yield chorismate, which is the branch point compound that serves as the starting substrate for the three terminal pathways of aromatic amino acid biosynthesis. This reaction introduces a second double bond into the aromatic ring system. The chain is Chorismate synthase from Wolinella succinogenes (strain ATCC 29543 / DSM 1740 / CCUG 13145 / JCM 31913 / LMG 7466 / NCTC 11488 / FDC 602W) (Vibrio succinogenes).